The primary structure comprises 197 residues: Putative WUSCHEL-related homeobox 10 (197 aa).

A DNA-binding region (homeobox; WUS-type) is located at residues 75–139; it reads STRPRWTPTT…NRRARSKRKQ (65 aa). Residues 132–168 form a disordered region; it reads RARSKRKQPPTTTITSSQADDAAVTTTEERGRCGDDS. Over residues 140-150 the composition is skewed to polar residues; it reads PPTTTITSSQA.

Belongs to the WUS homeobox family.

The protein resides in the nucleus. Potential transcription factor that plays a central role during developmental processes. This chain is Putative WUSCHEL-related homeobox 10 (WOX10), found in Arabidopsis thaliana (Mouse-ear cress).